Reading from the N-terminus, the 337-residue chain is Methionyl-tRNA formyltransferase (337 aa).

116-119 (SILP) provides a ligand contact to (6S)-5,6,7,8-tetrahydrofolate.

The protein belongs to the Fmt family.

It catalyses the reaction L-methionyl-tRNA(fMet) + (6R)-10-formyltetrahydrofolate = N-formyl-L-methionyl-tRNA(fMet) + (6S)-5,6,7,8-tetrahydrofolate + H(+). In terms of biological role, attaches a formyl group to the free amino group of methionyl-tRNA(fMet). The formyl group appears to play a dual role in the initiator identity of N-formylmethionyl-tRNA by promoting its recognition by IF2 and preventing the misappropriation of this tRNA by the elongation apparatus. The chain is Methionyl-tRNA formyltransferase from Desulfovibrio desulfuricans (strain ATCC 27774 / DSM 6949 / MB).